We begin with the raw amino-acid sequence, 548 residues long: Glucose-6-phosphate isomerase 1 (548 aa).

Glu-353 functions as the Proton donor in the catalytic mechanism. Catalysis depends on residues His-384 and Lys-512.

The protein belongs to the GPI family.

The protein localises to the cytoplasm. It catalyses the reaction alpha-D-glucose 6-phosphate = beta-D-fructose 6-phosphate. Its pathway is carbohydrate biosynthesis; gluconeogenesis. It participates in carbohydrate degradation; glycolysis; D-glyceraldehyde 3-phosphate and glycerone phosphate from D-glucose: step 2/4. Catalyzes the reversible isomerization of glucose-6-phosphate to fructose-6-phosphate. This Neisseria meningitidis serogroup A / serotype 4A (strain DSM 15465 / Z2491) protein is Glucose-6-phosphate isomerase 1.